Reading from the N-terminus, the 60-residue chain is Cytotoxin 5 (60 aa).

4 disulfide bridges follow: cysteine 3-cysteine 21, cysteine 14-cysteine 38, cysteine 42-cysteine 53, and cysteine 54-cysteine 59.

This sequence belongs to the three-finger toxin family. Short-chain subfamily. Type IA cytotoxin sub-subfamily. In terms of assembly, monomer in solution; Homodimer and oligomer in the presence of negatively charged lipids forming a pore with a size ranging between 20 and 30 Angstroms. Expressed by the venom gland.

Its subcellular location is the secreted. The protein resides in the target cell membrane. In terms of biological role, shows cytolytic activity on many different cells by forming pore in lipid membranes. In vivo, increases heart rate or kills the animal by cardiac arrest. In addition, it binds to heparin with high affinity, interacts with Kv channel-interacting protein 1 (KCNIP1) in a calcium-independent manner, and binds to integrin alpha-V/beta-3 (ITGAV/ITGB3) with moderate affinity. The sequence is that of Cytotoxin 5 from Naja annulifera (Banded Egyptian cobra).